A 415-amino-acid polypeptide reads, in one-letter code: Small ribosomal subunit protein uS5m (415 aa).

The interval 1-31 (MRRSGPELWKTLTSVSKSGQKKGRRNTRQPV) is disordered. An S5 DRBM domain is found at 131–197 (FETYCLEVKR…GMASRKIFHV (67 aa)). A disordered region spans residues 396–415 (GVEPMPLGIGLSHVVPKKDD).

It belongs to the universal ribosomal protein uS5 family. Component of the mitochondrial ribosome small subunit (28S) which comprises a 12S rRNA and about 30 distinct proteins.

Its subcellular location is the mitochondrion. The chain is Small ribosomal subunit protein uS5m (mrps-5) from Caenorhabditis briggsae.